Here is a 545-residue protein sequence, read N- to C-terminus: Probable protein kinase UbiB (545 aa).

Residues 123-501 enclose the Protein kinase domain; that stretch reads DFDIVPLASA…RVRQHQSHYL (379 aa). ATP is bound by residues 129 to 137 and Lys-152; that span reads LASASIAQV. Catalysis depends on Asp-287, which acts as the Proton acceptor. Transmembrane regions (helical) follow at residues 498-518 and 521-541; these read SHYLFGVGATLLLSGTAVVLS and EWDGLAAGLIAAGVVAWLVGW.

Belongs to the ABC1 family. UbiB subfamily.

Its subcellular location is the cell inner membrane. Its pathway is cofactor biosynthesis; ubiquinone biosynthesis [regulation]. Is probably a protein kinase regulator of UbiI activity which is involved in aerobic coenzyme Q (ubiquinone) biosynthesis. In Erwinia tasmaniensis (strain DSM 17950 / CFBP 7177 / CIP 109463 / NCPPB 4357 / Et1/99), this protein is Probable protein kinase UbiB.